The primary structure comprises 365 residues: Succinyl-diaminopimelate desuccinylase (365 aa).

Position 64 (H64) interacts with Zn(2+). D66 is an active-site residue. Zn(2+) is bound at residue D95. Catalysis depends on E125, which acts as the Proton acceptor. Residues E126, E154, and H339 each coordinate Zn(2+).

This sequence belongs to the peptidase M20A family. DapE subfamily. As to quaternary structure, homodimer. It depends on Zn(2+) as a cofactor. Co(2+) is required as a cofactor.

It catalyses the reaction N-succinyl-(2S,6S)-2,6-diaminopimelate + H2O = (2S,6S)-2,6-diaminopimelate + succinate. Its pathway is amino-acid biosynthesis; L-lysine biosynthesis via DAP pathway; LL-2,6-diaminopimelate from (S)-tetrahydrodipicolinate (succinylase route): step 3/3. Its function is as follows. Catalyzes the hydrolysis of N-succinyl-L,L-diaminopimelic acid (SDAP), forming succinate and LL-2,6-diaminopimelate (DAP), an intermediate involved in the bacterial biosynthesis of lysine and meso-diaminopimelic acid, an essential component of bacterial cell walls. In Sulfurimonas denitrificans (strain ATCC 33889 / DSM 1251) (Thiomicrospira denitrificans (strain ATCC 33889 / DSM 1251)), this protein is Succinyl-diaminopimelate desuccinylase.